The following is a 313-amino-acid chain: Pyrimidine-specific ribonucleoside hydrolase RihB (313 aa).

The Proton acceptor role is filled by D11. Ca(2+) is bound by residues D11, D16, and V124. Substrate-binding residues include Q227 and H239. D240 provides a ligand contact to Ca(2+).

The protein belongs to the IUNH family. RihB subfamily. As to quaternary structure, homotetramer. The cofactor is Ca(2+).

The enzyme catalyses a pyrimidine ribonucleoside + H2O = a pyrimidine nucleobase + D-ribose. Its function is as follows. Hydrolyzes cytidine or uridine to ribose and cytosine or uracil, respectively. Has a clear preference for cytidine over uridine. Strictly specific for ribonucleosides. The sequence is that of Pyrimidine-specific ribonucleoside hydrolase RihB from Escherichia coli O1:K1 / APEC.